Reading from the N-terminus, the 301-residue chain is Putative S-adenosyl-L-methionine-dependent methyltransferase MT0851 (301 aa).

Residues Asp-127 and 156-157 (DL) contribute to the S-adenosyl-L-methionine site.

It belongs to the UPF0677 family.

Exhibits S-adenosyl-L-methionine-dependent methyltransferase activity. In Mycobacterium tuberculosis (strain CDC 1551 / Oshkosh), this protein is Putative S-adenosyl-L-methionine-dependent methyltransferase MT0851.